Here is a 334-residue protein sequence, read N- to C-terminus: Protein-methionine-sulfoxide reductase catalytic subunit MsrP (334 aa).

Residues 1–44 (MKKIRKLTEADVTAESAFFMQRRQVLKALGISAAALSLPNAAHA) constitute a signal peptide (tat-type signal). Mo-molybdopterin contacts are provided by residues asparagine 88, 91–92 (YE), cysteine 146, threonine 181, asparagine 233, arginine 238, and 249–251 (GIK).

Belongs to the MsrP family. In terms of assembly, heterodimer of a catalytic subunit (MsrP) and a heme-binding subunit (MsrQ). Mo-molybdopterin serves as cofactor. Post-translationally, predicted to be exported by the Tat system. The position of the signal peptide cleavage has not been experimentally proven.

It is found in the periplasm. It catalyses the reaction L-methionyl-[protein] + a quinone + H2O = L-methionyl-(S)-S-oxide-[protein] + a quinol. It carries out the reaction L-methionyl-[protein] + a quinone + H2O = L-methionyl-(R)-S-oxide-[protein] + a quinol. Functionally, part of the MsrPQ system that repairs oxidized periplasmic proteins containing methionine sulfoxide residues (Met-O), using respiratory chain electrons. Thus protects these proteins from oxidative-stress damage caused by reactive species of oxygen and chlorine generated by the host defense mechanisms. MsrPQ is essential for the maintenance of envelope integrity under bleach stress, rescuing a wide series of structurally unrelated periplasmic proteins from methionine oxidation, including the primary periplasmic chaperone SurA and the lipoprotein Pal. The catalytic subunit MsrP is non-stereospecific, being able to reduce both (R-) and (S-) diastereoisomers of methionine sulfoxide. The chain is Protein-methionine-sulfoxide reductase catalytic subunit MsrP from Escherichia fergusonii (strain ATCC 35469 / DSM 13698 / CCUG 18766 / IAM 14443 / JCM 21226 / LMG 7866 / NBRC 102419 / NCTC 12128 / CDC 0568-73).